Reading from the N-terminus, the 359-residue chain is MDLLYAPSSTSAIEMSGQLRATLQQLETVAKFGRATASSISSVLFVSAGAGLAIARSLKRYTDQVGRNLRYEAYASATFVNLMRANPSMVNDPTTLVVLSSKSGMTPETVEAAAFLKDKACKSVVFTASANSKLASFGHQTFSTGITTQAFQAIHMLMLSLIGGILNERENWALLPALISSLQVLPAALFKAAEKGVQPGIAFAARFADDHPLYFIASGCAGIVPHAFGLCVLQERFGFEIHTVDGADFFHSFVETVRTAKRSHYILIIPDDASRPQMLDVKTFFDMRFKEGEISFQVIETTGFDMSGIDPQIGAIVGPMICEAFLKPWAPALAEATGKTMLDPLLHMGKFDYYNCHPA.

The SIS domain maps to 28–171 (TVAKFGRATA…IGGILNEREN (144 aa)).

This is Agropine synthesis conjugase (mas2) from Rhizobium rhizogenes (Agrobacterium rhizogenes).